Consider the following 307-residue polypeptide: Glutaminase (307 aa).

Residues S67, N117, E161, N168, Y192, Y243, and V261 each coordinate substrate.

It belongs to the glutaminase family. As to quaternary structure, homotetramer.

The catalysed reaction is L-glutamine + H2O = L-glutamate + NH4(+). The chain is Glutaminase from Streptomyces coelicolor (strain ATCC BAA-471 / A3(2) / M145).